The sequence spans 172 residues: Large ribosomal subunit protein uL10 (172 aa).

This sequence belongs to the universal ribosomal protein uL10 family. As to quaternary structure, part of the ribosomal stalk of the 50S ribosomal subunit. The N-terminus interacts with L11 and the large rRNA to form the base of the stalk. The C-terminus forms an elongated spine to which L12 dimers bind in a sequential fashion forming a multimeric L10(L12)X complex.

Functionally, forms part of the ribosomal stalk, playing a central role in the interaction of the ribosome with GTP-bound translation factors. In Syntrophotalea carbinolica (strain DSM 2380 / NBRC 103641 / GraBd1) (Pelobacter carbinolicus), this protein is Large ribosomal subunit protein uL10.